Reading from the N-terminus, the 173-residue chain is Small ribosomal subunit protein uS5 (173 aa).

The S5 DRBM domain occupies 17-80 (WQERVIQIRR…ADGKKQLIDV (64 aa)).

Belongs to the universal ribosomal protein uS5 family. As to quaternary structure, part of the 30S ribosomal subunit. Contacts proteins S4 and S8.

Its function is as follows. With S4 and S12 plays an important role in translational accuracy. Located at the back of the 30S subunit body where it stabilizes the conformation of the head with respect to the body. The chain is Small ribosomal subunit protein uS5 from Crocosphaera subtropica (strain ATCC 51142 / BH68) (Cyanothece sp. (strain ATCC 51142)).